We begin with the raw amino-acid sequence, 244 residues long: Ureidoacrylate amidohydrolase RutB (244 aa).

The active-site Proton acceptor is Asp38. The active site involves Lys147. The active-site Nucleophile is the Cys180.

Belongs to the isochorismatase family. RutB subfamily.

The enzyme catalyses (Z)-3-ureidoacrylate + H2O + H(+) = (Z)-3-aminoacrylate + NH4(+) + CO2. It catalyses the reaction (Z)-3-ureidoacrylate + H2O = (Z)-3-aminoacrylate + carbamate + H(+). The catalysed reaction is (Z)-2-methylureidoacrylate + H2O + H(+) = (Z)-2-methylaminoacrylate + NH4(+) + CO2. Its function is as follows. Hydrolyzes ureidoacrylate to form aminoacrylate and carbamate. The carbamate hydrolyzes spontaneously, thereby releasing one of the nitrogen atoms of the pyrimidine ring as ammonia and one of its carbon atoms as CO2. This Shigella flexneri serotype X (strain 2002017) protein is Ureidoacrylate amidohydrolase RutB.